A 1048-amino-acid chain; its full sequence is Anguibactin system regulator (1048 aa).

Residues 965–1039 (PIITASEDRV…AFAIIMDRCR (75 aa)) enclose the Carrier domain.

Belongs to the ATP-dependent AMP-binding enzyme family.

It functions in the pathway siderophore biosynthesis; anguibactin biosynthesis. Bifunctional protein that plays an essential role in virulence. Plays a role in both production of the siderophore anguibactin and regulation of iron transport genes. The sequence is that of Anguibactin system regulator (angR) from Vibrio anguillarum (strain ATCC 68554 / 775) (Listonella anguillarum).